Reading from the N-terminus, the 434-residue chain is Nicotinate phosphoribosyltransferase (434 aa).

At H242 the chain carries Phosphohistidine; by autocatalysis.

Belongs to the NAPRTase family. Post-translationally, transiently phosphorylated on a His residue during the reaction cycle. Phosphorylation strongly increases the affinity for substrates and increases the rate of nicotinate D-ribonucleotide production. Dephosphorylation regenerates the low-affinity form of the enzyme, leading to product release.

The catalysed reaction is nicotinate + 5-phospho-alpha-D-ribose 1-diphosphate + ATP + H2O = nicotinate beta-D-ribonucleotide + ADP + phosphate + diphosphate. Its pathway is cofactor biosynthesis; NAD(+) biosynthesis; nicotinate D-ribonucleotide from nicotinate: step 1/1. Functionally, catalyzes the synthesis of beta-nicotinate D-ribonucleotide from nicotinate and 5-phospho-D-ribose 1-phosphate at the expense of ATP. This chain is Nicotinate phosphoribosyltransferase, found in Rhizobium rhizogenes (strain K84 / ATCC BAA-868) (Agrobacterium radiobacter).